The sequence spans 400 residues: Cytohesin-2 (400 aa).

Residues 10-63 (DLTPEERMELENIRRRKQELLVEIQRLREELSEAMSEVEGLEANEGSKTLQRNR) are a coiled coil. In terms of domain architecture, SEC7 spans 72–201 (FNMDPKKGIQ…VIMLNTSLHN (130 aa)). A PH domain is found at 259–376 (NPDREGWLLK…WIKSIQAAVS (118 aa)). Residues 268 to 276 (KLGGGRVKT), arginine 280, tyrosine 291, arginine 301, lysine 339, asparagine 350, and histidine 351 contribute to the a 1,2-diacyl-sn-glycero-3-phospho-(1D-myo-inositol-3,4,5-trisphosphate) site. The C-terminal autoinhibitory region stretch occupies residues 387–395 (RKKRISVKK).

As to quaternary structure, heteromer. Composed of TAMALIN, CYTH2 and at least one GRM1. Interacts with ARRB1. Interacts with ARL4D; the interaction is direct. Directly interacts with CCDC120 through the coiled coil domain; this interaction stabilizes CCDC120, possibly by preventing its ubiquitination, and is required for neurite growth in neuroblastoma cells. Interacts with ARF1. Interacts with FRMD4A. Interacts (via N-terminal domain) with INAVA (via N-terminal domain). In terms of tissue distribution, widely expressed.

Its subcellular location is the cell membrane. The protein localises to the cytoplasm. It localises to the cell projection. The protein resides in the growth cone. It is found in the cell junction. Its subcellular location is the tight junction. The protein localises to the adherens junction. Acts as a guanine-nucleotide exchange factor (GEF). Promotes guanine-nucleotide exchange on ARF1, ARF3 and ARF6. Activates ARF factors through replacement of GDP with GTP. The cell membrane form, in association with ARL4 proteins, recruits ARF6 to the plasma membrane. Involved in neurite growth. This chain is Cytohesin-2, found in Homo sapiens (Human).